Consider the following 172-residue polypeptide: NADH-ubiquinone oxidoreductase chain 6 (172 aa).

5 helical membrane-spanning segments follow: residues 1 to 21 (MTYF…AVAS), 25 to 45 (PYFA…VLVG), 53 to 73 (LVLF…AALA), 86 to 106 (VLGY…IFWG), and 140 to 160 (GGML…VLEL).

The protein belongs to the complex I subunit 6 family.

The protein resides in the mitochondrion membrane. The enzyme catalyses a ubiquinone + NADH + 5 H(+)(in) = a ubiquinol + NAD(+) + 4 H(+)(out). Functionally, core subunit of the mitochondrial membrane respiratory chain NADH dehydrogenase (Complex I) that is believed to belong to the minimal assembly required for catalysis. Complex I functions in the transfer of electrons from NADH to the respiratory chain. The immediate electron acceptor for the enzyme is believed to be ubiquinone. This Cyprinus carpio (Common carp) protein is NADH-ubiquinone oxidoreductase chain 6 (MT-ND6).